Consider the following 163-residue polypeptide: Nucleotide-binding protein YajQ (163 aa).

It belongs to the YajQ family.

Nucleotide-binding protein. This chain is Nucleotide-binding protein YajQ, found in Salmonella typhi.